We begin with the raw amino-acid sequence, 378 residues long: Chaperone protein DnaJ 2 (378 aa).

In terms of domain architecture, J spans 4 to 68 (DYYAVLGVRR…QKKQVYDLGG (65 aa)). The CR-type zinc finger occupies 130–212 (GTTKDIQVDT…CAGDGRVRSR (83 aa)). Residues Cys143, Cys146, Cys160, Cys163, Cys186, Cys189, Cys200, and Cys203 each contribute to the Zn(2+) site. 4 CXXCXGXG motif repeats span residues 143–150 (CNTCNGEG), 160–167 (CDMCRGRG), 186–193 (CPQCQGFG), and 200–207 (CPECAGDG). Disordered regions lie at residues 297-319 (RPGTQSGQSIPKHGRGVTHLRGG) and 351-378 (RGEERPTGQFQPGQQGLFSRLKDAFNGR). Residues 358–367 (GQFQPGQQGL) are compositionally biased toward polar residues.

The protein belongs to the DnaJ family. As to quaternary structure, homodimer. The cofactor is Zn(2+).

It localises to the cytoplasm. Participates actively in the response to hyperosmotic and heat shock by preventing the aggregation of stress-denatured proteins and by disaggregating proteins, also in an autonomous, DnaK-independent fashion. Unfolded proteins bind initially to DnaJ; upon interaction with the DnaJ-bound protein, DnaK hydrolyzes its bound ATP, resulting in the formation of a stable complex. GrpE releases ADP from DnaK; ATP binding to DnaK triggers the release of the substrate protein, thus completing the reaction cycle. Several rounds of ATP-dependent interactions between DnaJ, DnaK and GrpE are required for fully efficient folding. Also involved, together with DnaK and GrpE, in the DNA replication of plasmids through activation of initiation proteins. This chain is Chaperone protein DnaJ 2, found in Streptomyces coelicolor (strain ATCC BAA-471 / A3(2) / M145).